A 315-amino-acid polypeptide reads, in one-letter code: Acetaldehyde dehydrogenase 2 (315 aa).

13-16 (SGNI) contacts NAD(+). Catalysis depends on C131, which acts as the Acyl-thioester intermediate. Residues 162–170 (SAGPGTRAN) and N290 contribute to the NAD(+) site.

It belongs to the acetaldehyde dehydrogenase family.

It catalyses the reaction acetaldehyde + NAD(+) + CoA = acetyl-CoA + NADH + H(+). In Pseudomonas putida (strain W619), this protein is Acetaldehyde dehydrogenase 2.